Here is a 1807-residue protein sequence, read N- to C-terminus: Phospholipase D (1807 aa).

The tract at residues 1–28 is disordered; sequence MPGPDDDVREPTAAARTNNSGYGLRAAP. Transmembrane regions (helical) follow at residues 257-277, 305-325, and 587-607; these read IAFV…IVTS, AGVF…VFVY, and VYYI…GFLA. A disordered region spans residues 697–734; sequence TASRMGTGNLAPASSRVDSSTQSEDSFEAPKPPPSSVS. 2 PLD phosphodiesterase domains span residues 853–880 and 1249–1276; these read GFWS…CFGR and EQIY…NDRS. Catalysis depends on residues His-858, Lys-860, Asp-865, His-1254, Lys-1256, and Asp-1261. Composition is skewed to polar residues over residues 1531 to 1547, 1568 to 1578, and 1597 to 1614; these read FSRS…SQLD, YNSNSMPSNAS, and YPNS…QSPA. The disordered stretch occupies residues 1531 to 1621; it reads FSRSNSVSTP…SPAIATGARS (91 aa).

Belongs to the phospholipase D family. TM-PLD subfamily.

The protein localises to the membrane. It catalyses the reaction a 1,2-diacyl-sn-glycero-3-phosphocholine + H2O = a 1,2-diacyl-sn-glycero-3-phosphate + choline + H(+). Hydrolyzes glycerol-phospholipids at the terminal phosphodiesteric bond. The polypeptide is Phospholipase D (Phytophthora infestans (Potato late blight agent)).